An 846-amino-acid polypeptide reads, in one-letter code: Translation initiation factor IF-2 (846 aa).

The interval 198–219 (YKREEEEKKSKAKKAGGKGFKK) is disordered. Over residues 207 to 219 (SKAKKAGGKGFKK) the composition is skewed to basic residues. In terms of domain architecture, tr-type G spans 345-512 (SRAPVVTIMG…AVLLQSEVLE (168 aa)). Residues 354–361 (GHVDHGKT) are G1. 354–361 (GHVDHGKT) serves as a coordination point for GTP. A G2 region spans residues 379 to 383 (GITQH). The interval 400–403 (DTPG) is G3. GTP-binding positions include 400 to 404 (DTPGH) and 454 to 457 (NKID). The interval 454 to 457 (NKID) is G4. The G5 stretch occupies residues 490–492 (SAK).

Belongs to the TRAFAC class translation factor GTPase superfamily. Classic translation factor GTPase family. IF-2 subfamily.

The protein resides in the cytoplasm. In terms of biological role, one of the essential components for the initiation of protein synthesis. Protects formylmethionyl-tRNA from spontaneous hydrolysis and promotes its binding to the 30S ribosomal subunits. Also involved in the hydrolysis of GTP during the formation of the 70S ribosomal complex. The sequence is that of Translation initiation factor IF-2 from Francisella tularensis subsp. novicida (strain U112).